The following is a 246-amino-acid chain: Orotidine 5'-phosphate decarboxylase (246 aa).

Substrate contacts are provided by residues Asp-22, Lys-44, 71-80 (DLKYHDIPHT), Thr-130, Arg-191, Gln-201, Gly-221, and Arg-222. Lys-73 serves as the catalytic Proton donor.

This sequence belongs to the OMP decarboxylase family. Type 1 subfamily. Homodimer.

The catalysed reaction is orotidine 5'-phosphate + H(+) = UMP + CO2. It functions in the pathway pyrimidine metabolism; UMP biosynthesis via de novo pathway; UMP from orotate: step 2/2. Its function is as follows. Catalyzes the decarboxylation of orotidine 5'-monophosphate (OMP) to uridine 5'-monophosphate (UMP). The polypeptide is Orotidine 5'-phosphate decarboxylase (Neisseria meningitidis serogroup B (strain ATCC BAA-335 / MC58)).